We begin with the raw amino-acid sequence, 238 residues long: MENSSLLLTALFNPDHLIIFSKMLLAMVLGSVIGLERELKRKPVGVKTCAIIAVTTCVLTIVSIQAAEHYAQVSENIRTDPMRLAAQVISGIGFLGAGVILHKKNDAISGLTTAAIIWASAGIGIAAGAGFVFDAVIATVMILVSIRLSPLVQRWVHRKSQRRRTKFNILVNDAESIGKVTQLLVNNQYRIEHIQVKDQSSGEVRLQIRCFSIDSTMLKDAYALLKAEDGVISVEVDN.

A run of 4 helical transmembrane segments spans residues 16 to 36, 44 to 64, 81 to 101, and 123 to 143; these read HLII…IGLE, VGVK…IVSI, PMRL…GVIL, and IGIA…VMIL.

This sequence belongs to the MgtC/SapB family.

It localises to the cell inner membrane. This is an uncharacterized protein from Haemophilus influenzae (strain ATCC 51907 / DSM 11121 / KW20 / Rd).